The chain runs to 133 residues: UPF0225 protein BB3385 (133 aa).

It belongs to the UPF0225 family.

The sequence is that of UPF0225 protein BB3385 from Bordetella bronchiseptica (strain ATCC BAA-588 / NCTC 13252 / RB50) (Alcaligenes bronchisepticus).